Consider the following 500-residue polypeptide: L-arabinose isomerase (500 aa).

Mn(2+)-binding residues include Glu306, Glu333, His349, and His448.

Belongs to the arabinose isomerase family. Mn(2+) serves as cofactor.

It carries out the reaction beta-L-arabinopyranose = L-ribulose. Its pathway is carbohydrate degradation; L-arabinose degradation via L-ribulose; D-xylulose 5-phosphate from L-arabinose (bacterial route): step 1/3. In terms of biological role, catalyzes the conversion of L-arabinose to L-ribulose. This chain is L-arabinose isomerase, found in Shewanella sp. (strain MR-4).